The chain runs to 323 residues: Solute carrier family 35 member B1 (323 aa).

8 helical membrane-spanning segments follow: residues 15–35 (LVCFLGVFVCYFYYGILQETI), 51–71 (FALSLVFVQCIVNALFAKLLI), 85–105 (WLYAACSLSYLGAMVSSNSAL), 136–156 (YPLSKYLCVLLIVLGVALFMY), 169–189 (TFGYGELLLLLSLTLDGLTGV), 205–225 (MMLYINLWSSLFLGAGIVFTG), 253–273 (LGQTFIFMTVVYFGPLTCSII), and 286–306 (VILFSNPISSIQWVGTILVFL). The Di-lysine motif signature appears at 319-323 (KKPSH).

It belongs to the nucleotide-sugar transporter family. SLC35B subfamily.

Its subcellular location is the endoplasmic reticulum membrane. Probable sugar transporter. This Xenopus tropicalis (Western clawed frog) protein is Solute carrier family 35 member B1 (slc35b1).